A 420-amino-acid chain; its full sequence is Disease resistance protein CHS1 (420 aa).

The 156-residue stretch at 12 to 167 (RELDVFLSFS…QIADDIRLMF (156 aa)) folds into the TIR domain. Residue glutamate 86 is part of the active site. Positions 185–406 (MKALYALLAL…KDIKEVWKIM (222 aa)) constitute an NB-ARC domain.

As to expression, mostly expressed in leaves and flowers (mainly in sepals), and, at a lower intensity, in stems. Present at low levels in roots and seeds.

It is found in the cytoplasm. Its subcellular location is the nucleus. It carries out the reaction NAD(+) + H2O = ADP-D-ribose + nicotinamide + H(+). Its function is as follows. Confers resistance to low temperatures by limiting chloroplast damage and cell death, thus maintaining growth homeostasis. Regulates steryl-esters and sterols accumulation. Limits leaf necrosis associated with virulent bacterial infection (e.g. Pseudomonas syringae pv. tomato DC3000). The polypeptide is Disease resistance protein CHS1 (Arabidopsis thaliana (Mouse-ear cress)).